Consider the following 881-residue polypeptide: Nitrate reductase [NADH] 1 (881 aa).

A disordered region spans residues 1-46 (MAASVEHRPFTSHQHGVVRSFKSYPDVPRPKKLPLPQPLSDSTNDN). A Mo-molybdopterin-binding site is contributed by cysteine 167. The 76-residue stretch at 515–590 (TKSYSLSEVR…LEDYRIGELM (76 aa)) folds into the Cytochrome b5 heme-binding domain. Histidine 550 and histidine 573 together coordinate heme. In terms of domain architecture, FAD-binding FR-type spans 625 to 737 (REKIPCKLLS…KGPLGHIEYT (113 aa)). FAD contacts are provided by residues 677–680 (RAYT), 694–698 (VVKVY), phenylalanine 699, phenylalanine 706, 711–713 (IMS), and threonine 764.

It belongs to the nitrate reductase family. In terms of assembly, homodimer. Requires FAD as cofactor. Heme serves as cofactor. It depends on Mo-molybdopterin as a cofactor.

It carries out the reaction nitrite + NAD(+) + H2O = nitrate + NADH + H(+). Functionally, nitrate reductase is a key enzyme involved in the first step of nitrate assimilation in plants, fungi and bacteria. The chain is Nitrate reductase [NADH] 1 (NIA1) from Phaseolus vulgaris (Kidney bean).